Here is a 156-residue protein sequence, read N- to C-terminus: Small ribosomal subunit protein uS7 (156 aa).

Belongs to the universal ribosomal protein uS7 family. As to quaternary structure, part of the 30S ribosomal subunit. Contacts proteins S9 and S11.

Functionally, one of the primary rRNA binding proteins, it binds directly to 16S rRNA where it nucleates assembly of the head domain of the 30S subunit. Is located at the subunit interface close to the decoding center, probably blocks exit of the E-site tRNA. This Vibrio vulnificus (strain CMCP6) protein is Small ribosomal subunit protein uS7.